We begin with the raw amino-acid sequence, 303 residues long: BAG family molecular chaperone regulator 3 (303 aa).

Positions 1-11 (MMKMNTGTSPS) are enriched in polar residues. The segment at 1 to 27 (MMKMNTGTSPSVIGGGTSGNEWESRPG) is disordered. The 75-residue stretch at 45–119 (FRVRVKYGSV…LVVKEDPISQ (75 aa)) folds into the Ubiquitin-like domain. The region spanning 138 to 216 (SISDISFEVD…KYVEALDLLK (79 aa)) is the BAG domain. The interval 249–268 (VEEEEEEPRNSNASSSSGTP) is disordered. A compositionally biased stretch (polar residues) spans 258–267 (NSNASSSSGT). Ser-263 carries the post-translational modification Phosphoserine.

Binds to the ATPase domain of HSP70/HSC70 chaperones. Interacts with HSP70-1.

Its function is as follows. Co-chaperone that regulates diverse cellular pathways, such as programmed cell death and stress responses. This Arabidopsis thaliana (Mouse-ear cress) protein is BAG family molecular chaperone regulator 3 (BAG3).